The following is a 388-amino-acid chain: Meiotic driver wtf13 (388 aa).

The span at Met-1 to Pro-29 shows a compositional bias: basic and acidic residues. Residues Met-1–Ser-39 are disordered. The next 9 helical transmembrane spans lie at Leu-89–Pro-109, Ala-119–Phe-139, Val-152–Val-172, Cys-182–Tyr-202, Asp-207–Val-227, Cys-243–Leu-263, Leu-267–Leu-287, Ala-297–Tyr-317, and Phe-331–Gly-351.

Belongs to the WTF family. Homomer. Forms protein aggregates. The two isoforms can interact with each other and with themselves. High sequence similarity is required for their interaction.

It is found in the spore membrane. The protein resides in the vacuole membrane. Its subcellular location is the ascus epiplasm. It localises to the cytoplasm. The protein localises to the endoplasmic reticulum membrane. Functionally, promotes unequal transmission of alleles from the parental zygote to progeny spores by acting as poison/antidote system where the poison and antidote proteins are produced from the same locus; the poison component is trans-acting and targets all spores within an ascus whereas the antidote component is spore-specific, leading to poisoning of all progeny that do not inherit the allele. In terms of biological role, localizes isoform 2 to the vacuole thereby facilitating its degradation. In addition to suppressing isoform 2, also suppresses S.pombe strain FY29033 wtf18 isoform 2. Forms toxic aggregates that disrupt spore maturation. This chain is Meiotic driver wtf13, found in Schizosaccharomyces pombe (strain 972 / ATCC 24843) (Fission yeast).